The chain runs to 245 residues: Retrovirus-related Pol polyprotein from type-1 retrotransposable element R1 (245 aa).

One can recognise a Reverse transcriptase domain in the interval 1-105 (LKDGTGIVAA…VDLETYCNKA (105 aa)). The nucleic acid-binding endonuclease stretch occupies residues 106-245 (EVRQKFREKE…IVRDDSNLEQ (140 aa)).

The catalysed reaction is DNA(n) + a 2'-deoxyribonucleoside 5'-triphosphate = DNA(n+1) + diphosphate. In Popillia japonica (Japanese beetle), this protein is Retrovirus-related Pol polyprotein from type-1 retrotransposable element R1.